The chain runs to 832 residues: Dolichyl-phosphate-mannose--protein mannosyltransferase 6 (832 aa).

The interval 1 to 44 is disordered; that stretch reads MATGYSTGVSPFDLDENNHNDSIHHRHQNHHSQSHDSSGERDDT. N-linked (GlcNAc...) asparagine glycans are attached at residues Asn20 and Asn59. 7 helical membrane-spanning segments follow: residues 135 to 155, 175 to 194, 206 to 227, 232 to 252, 266 to 286, 293 to 311, and 327 to 347; these read FYFD…GYLA, YVFM…PLAY, TCWL…SKFI, MLLF…TLAI, LEIK…SVKW, ALVG…YQTF, and LIHW…IYVA. Asn357 is a glycosylation site (N-linked (GlcNAc...) asparagine). In terms of domain architecture, MIR 1 spans 383-437; sequence PRSVAFGSLVTIRSQGLSPNLIHSHPHNYPQGSQEQQVTTYGFKDDNNEFLFEFG. Residue Asn453 is glycosylated (N-linked (GlcNAc...) asparagine). 2 consecutive MIR domains span residues 466-522 and 537-595; these read HVII…IEIQ and PSEI…IEKH. Helical transmembrane passes span 676 to 696, 723 to 743, 755 to 775, and 787 to 807; these read ITWI…VVGI, LLAA…VPFI, VPAL…ILNL, and IFKV…FWYF.

Belongs to the glycosyltransferase 39 family.

Its subcellular location is the endoplasmic reticulum membrane. The catalysed reaction is a di-trans,poly-cis-dolichyl beta-D-mannosyl phosphate + L-seryl-[protein] = 3-O-(alpha-D-mannosyl)-L-seryl-[protein] + a di-trans,poly-cis-dolichyl phosphate + H(+). It catalyses the reaction a di-trans,poly-cis-dolichyl beta-D-mannosyl phosphate + L-threonyl-[protein] = 3-O-(alpha-D-mannosyl)-L-threonyl-[protein] + a di-trans,poly-cis-dolichyl phosphate + H(+). It functions in the pathway protein modification; protein glycosylation. Protein mannosyltransferase (PMT) involved in hyphal morphogenesis and drug sensitivity. Transfers mannose from Dol-P-mannose to Ser or Thr residues on proteins. PMT1, PMT2 and PMT4 account for most of the protein-O-glycosylation activity, while PMT5 and PMT6 may specifically modulate a much narrower spectrum of target proteins. Required for biofilm formation and virulence. The polypeptide is Dolichyl-phosphate-mannose--protein mannosyltransferase 6 (PMT6) (Candida albicans (strain SC5314 / ATCC MYA-2876) (Yeast)).